The primary structure comprises 295 residues: Shikimate dehydrogenase (NADP(+)) (295 aa).

Shikimate is bound by residues 18-20 and T66; that span reads SRS. Residue K70 is the Proton acceptor of the active site. Residues N91 and D106 each coordinate shikimate. Residues 130–134 and M235 contribute to the NADP(+) site; that span reads GNGGA. Y237 is a shikimate binding site. G258 is a binding site for NADP(+).

It belongs to the shikimate dehydrogenase family. In terms of assembly, homodimer.

The catalysed reaction is shikimate + NADP(+) = 3-dehydroshikimate + NADPH + H(+). It functions in the pathway metabolic intermediate biosynthesis; chorismate biosynthesis; chorismate from D-erythrose 4-phosphate and phosphoenolpyruvate: step 4/7. Its function is as follows. Involved in the biosynthesis of the chorismate, which leads to the biosynthesis of aromatic amino acids. Catalyzes the reversible NADPH linked reduction of 3-dehydroshikimate (DHSA) to yield shikimate (SA). This chain is Shikimate dehydrogenase (NADP(+)), found in Chlorobium phaeobacteroides (strain DSM 266 / SMG 266 / 2430).